A 393-amino-acid chain; its full sequence is Arginine biosynthesis bifunctional protein ArgJ (393 aa).

Residues threonine 143, lysine 168, threonine 179, glutamate 265, asparagine 388, and threonine 393 each contribute to the substrate site. Catalysis depends on threonine 179, which acts as the Nucleophile.

Belongs to the ArgJ family. In terms of assembly, heterotetramer of two alpha and two beta chains.

It localises to the cytoplasm. It catalyses the reaction N(2)-acetyl-L-ornithine + L-glutamate = N-acetyl-L-glutamate + L-ornithine. It carries out the reaction L-glutamate + acetyl-CoA = N-acetyl-L-glutamate + CoA + H(+). It participates in amino-acid biosynthesis; L-arginine biosynthesis; L-ornithine and N-acetyl-L-glutamate from L-glutamate and N(2)-acetyl-L-ornithine (cyclic): step 1/1. Its pathway is amino-acid biosynthesis; L-arginine biosynthesis; N(2)-acetyl-L-ornithine from L-glutamate: step 1/4. Catalyzes two activities which are involved in the cyclic version of arginine biosynthesis: the synthesis of N-acetylglutamate from glutamate and acetyl-CoA as the acetyl donor, and of ornithine by transacetylation between N(2)-acetylornithine and glutamate. The sequence is that of Arginine biosynthesis bifunctional protein ArgJ from Syntrophotalea carbinolica (strain DSM 2380 / NBRC 103641 / GraBd1) (Pelobacter carbinolicus).